A 267-amino-acid chain; its full sequence is Acyl-[acyl-carrier-protein]--UDP-N-acetylglucosamine O-acyltransferase (267 aa).

The protein belongs to the transferase hexapeptide repeat family. LpxA subfamily. In terms of assembly, homotrimer.

The protein resides in the cytoplasm. The enzyme catalyses a (3R)-hydroxyacyl-[ACP] + UDP-N-acetyl-alpha-D-glucosamine = a UDP-3-O-[(3R)-3-hydroxyacyl]-N-acetyl-alpha-D-glucosamine + holo-[ACP]. It functions in the pathway glycolipid biosynthesis; lipid IV(A) biosynthesis; lipid IV(A) from (3R)-3-hydroxytetradecanoyl-[acyl-carrier-protein] and UDP-N-acetyl-alpha-D-glucosamine: step 1/6. Its function is as follows. Involved in the biosynthesis of lipid A, a phosphorylated glycolipid that anchors the lipopolysaccharide to the outer membrane of the cell. The chain is Acyl-[acyl-carrier-protein]--UDP-N-acetylglucosamine O-acyltransferase from Cupriavidus pinatubonensis (strain JMP 134 / LMG 1197) (Cupriavidus necator (strain JMP 134)).